A 458-amino-acid chain; its full sequence is UDP-glycosyltransferase 76G1 (458 aa).

The active-site Proton acceptor is the His25. A rebaudioside A-binding site is contributed by His25. Residue His25 participates in rubusoside binding. Asn27 contacts UDP. Residue Asp124 is the Charge relay of the active site. Residues 146 to 147 (TS) and His155 each bind rebaudioside A. UDP-binding positions include Ser283, 338 to 339 (WV), and 356 to 364 (HSGWNSTLE). Residues Trp359 and 380 to 381 (DQ) each bind rebaudioside A.

It belongs to the UDP-glycosyltransferase family. In terms of assembly, monomer.

It carries out the reaction steviolbioside + UDP-alpha-D-glucose = rebaudioside B + UDP + H(+). The enzyme catalyses stevioside + UDP-alpha-D-glucose = rebaudioside A + UDP + H(+). It catalyses the reaction rebaudioside E + UDP-alpha-D-glucose = rebaudioside D + UDP + H(+). The catalysed reaction is rebaudioside D + UDP-alpha-D-glucose = rebaudioside M + UDP + H(+). In terms of biological role, involved in the biosynthesis of steviol glycosides in leaves. Converts the di-glycoside steviolbioside to the tri-glycoside rebaudioside B. Converts the tri-glycoside stevioside to the tetra-glycoside rebaudioside A. Converts the tetra-glycoside rebaudioside E to the penta-glycoside rebaudioside D. Converts the penta-glycoside rebaudioside D to the hexa-glycoside rebaudioside M. Can glucosylate rubusoside and rebaudioside A in vitro. This Stevia rebaudiana (Stevia) protein is UDP-glycosyltransferase 76G1.